A 400-amino-acid chain; its full sequence is Formate-dependent phosphoribosylglycinamide formyltransferase (400 aa).

Residues 22–23 (EL) and glutamate 82 each bind N(1)-(5-phospho-beta-D-ribosyl)glycinamide. Residues arginine 115, lysine 157, 162–167 (SSGKGQ), 197–200 (EGFI), and glutamate 205 each bind ATP. The ATP-grasp domain maps to 120-315 (RLAAETLGVP…EFELHARAIL (196 aa)). The Mg(2+) site is built by glutamate 274 and glutamate 286. Residues aspartate 293, lysine 362, and 369 to 370 (RR) each bind N(1)-(5-phospho-beta-D-ribosyl)glycinamide.

This sequence belongs to the PurK/PurT family. Homodimer.

The enzyme catalyses N(1)-(5-phospho-beta-D-ribosyl)glycinamide + formate + ATP = N(2)-formyl-N(1)-(5-phospho-beta-D-ribosyl)glycinamide + ADP + phosphate + H(+). It participates in purine metabolism; IMP biosynthesis via de novo pathway; N(2)-formyl-N(1)-(5-phospho-D-ribosyl)glycinamide from N(1)-(5-phospho-D-ribosyl)glycinamide (formate route): step 1/1. Involved in the de novo purine biosynthesis. Catalyzes the transfer of formate to 5-phospho-ribosyl-glycinamide (GAR), producing 5-phospho-ribosyl-N-formylglycinamide (FGAR). Formate is provided by PurU via hydrolysis of 10-formyl-tetrahydrofolate. This Variovorax paradoxus (strain S110) protein is Formate-dependent phosphoribosylglycinamide formyltransferase.